Consider the following 305-residue polypeptide: Homoserine kinase (305 aa).

ATP is bound at residue Pro-93–Thr-103.

This sequence belongs to the GHMP kinase family. Homoserine kinase subfamily.

Its subcellular location is the cytoplasm. It catalyses the reaction L-homoserine + ATP = O-phospho-L-homoserine + ADP + H(+). It functions in the pathway amino-acid biosynthesis; L-threonine biosynthesis; L-threonine from L-aspartate: step 4/5. In terms of biological role, catalyzes the ATP-dependent phosphorylation of L-homoserine to L-homoserine phosphate. This Trichodesmium erythraeum (strain IMS101) protein is Homoserine kinase.